The following is a 788-amino-acid chain: Endonuclease MutS2 (788 aa).

An ATP-binding site is contributed by 332–339 (GPNTGGKT). The region spanning 713–788 (VDLRGMDAEE…GTGVTVVELK (76 aa)) is the Smr domain.

The protein belongs to the DNA mismatch repair MutS family. MutS2 subfamily. In terms of assembly, homodimer. Binds to stalled ribosomes, contacting rRNA.

Functionally, endonuclease that is involved in the suppression of homologous recombination and thus may have a key role in the control of bacterial genetic diversity. Its function is as follows. Acts as a ribosome collision sensor, splitting the ribosome into its 2 subunits. Detects stalled/collided 70S ribosomes which it binds and splits by an ATP-hydrolysis driven conformational change. Acts upstream of the ribosome quality control system (RQC), a ribosome-associated complex that mediates the extraction of incompletely synthesized nascent chains from stalled ribosomes and their subsequent degradation. Probably generates substrates for RQC. The polypeptide is Endonuclease MutS2 (Clostridium botulinum (strain ATCC 19397 / Type A)).